A 476-amino-acid chain; its full sequence is Argininosuccinate lyase (476 aa).

It belongs to the lyase 1 family. Argininosuccinate lyase subfamily.

It localises to the cytoplasm. The catalysed reaction is 2-(N(omega)-L-arginino)succinate = fumarate + L-arginine. It functions in the pathway amino-acid biosynthesis; L-arginine biosynthesis; L-arginine from L-ornithine and carbamoyl phosphate: step 3/3. The sequence is that of Argininosuccinate lyase from Gluconacetobacter diazotrophicus (strain ATCC 49037 / DSM 5601 / CCUG 37298 / CIP 103539 / LMG 7603 / PAl5).